Reading from the N-terminus, the 361-residue chain is PTI1-like tyrosine-protein kinase At3g15890 (361 aa).

One can recognise a Protein kinase domain in the interval 39–328 (FNYDNKLGEG…ISELEANPLF (290 aa)). ATP-binding positions include 45–53 (LGEGRFGSV) and lysine 67. Aspartate 165 functions as the Proton acceptor in the catalytic mechanism. 2 disordered regions span residues 195–219 (TGDG…SGKE) and 323–361 (EANP…QQQE). Residues 351 to 361 (LEDKDHQQQQE) are compositionally biased toward basic and acidic residues.

This sequence belongs to the protein kinase superfamily. Tyr protein kinase family.

It carries out the reaction L-tyrosyl-[protein] + ATP = O-phospho-L-tyrosyl-[protein] + ADP + H(+). This Arabidopsis thaliana (Mouse-ear cress) protein is PTI1-like tyrosine-protein kinase At3g15890.